The chain runs to 330 residues: Protein ANTHESIS POMOTING FACTOR 1 (330 aa).

WD repeat units lie at residues 22–61 (DFGG…QLKI), 112–151 (GHKD…CQGI), 153–191 (HLRG…KGPF), 198–237 (GDTA…KKCG), 242–281 (PSQG…EVAR), and 284–323 (NNIG…APAD).

The protein belongs to the WD repeat SWD2 family. As to expression, expressed in the shoot apical meristem (SAM), embryos, seedlings, cotyledons, leaves primordia, young leaves and roots.

The protein localises to the nucleus. In terms of biological role, component of a chromatin regulatory complex involved in regulating chromatin structure in the nucleus. Promotes flowering under long days (LD) via the regulation of bolting. In Arabidopsis thaliana (Mouse-ear cress), this protein is Protein ANTHESIS POMOTING FACTOR 1.